Reading from the N-terminus, the 113-residue chain is Nitrogenase-stabilizing/protective protein NifW (113 aa).

It belongs to the NifW family. As to quaternary structure, homotrimer; associates with NifD.

Functionally, may protect the nitrogenase Fe-Mo protein from oxidative damage. The polypeptide is Nitrogenase-stabilizing/protective protein NifW (Polaromonas naphthalenivorans (strain CJ2)).